The sequence spans 258 residues: 4-hydroxy-tetrahydrodipicolinate reductase (258 aa).

Residue 10–15 (GCLGRM) participates in NAD(+) binding. Lys-38 is a binding site for NADP(+). NAD(+) contacts are provided by residues 89-91 (GTT) and 113-116 (AGNM). His-146 acts as the Proton donor/acceptor in catalysis. His-147 lines the (S)-2,3,4,5-tetrahydrodipicolinate pocket. The active-site Proton donor is Lys-150. (S)-2,3,4,5-tetrahydrodipicolinate is bound at residue 156-157 (GT).

The protein belongs to the DapB family.

It is found in the cytoplasm. It catalyses the reaction (S)-2,3,4,5-tetrahydrodipicolinate + NAD(+) + H2O = (2S,4S)-4-hydroxy-2,3,4,5-tetrahydrodipicolinate + NADH + H(+). The enzyme catalyses (S)-2,3,4,5-tetrahydrodipicolinate + NADP(+) + H2O = (2S,4S)-4-hydroxy-2,3,4,5-tetrahydrodipicolinate + NADPH + H(+). Its pathway is amino-acid biosynthesis; L-lysine biosynthesis via DAP pathway; (S)-tetrahydrodipicolinate from L-aspartate: step 4/4. Catalyzes the conversion of 4-hydroxy-tetrahydrodipicolinate (HTPA) to tetrahydrodipicolinate. In Pelagibacter ubique (strain HTCC1062), this protein is 4-hydroxy-tetrahydrodipicolinate reductase.